Here is a 134-residue protein sequence, read N- to C-terminus: Interleukin-5 (134 aa).

Residues 1 to 21 (MRMHLHLTLVALGAAYVCANA) form the signal peptide. N-linked (GlcNAc...) asparagine glycosylation is found at Asn76 and Asn90.

It belongs to the IL-5 family. In terms of assembly, homodimer; disulfide-linked. Interacts with IL5RA. Interacts with CSF2RB.

It is found in the secreted. Functionally, homodimeric cytokine expressed predominantly by T-lymphocytes and NK cells that plays an important role in the survival, differentiation, and chemotaxis of eosinophils. Also acts on activated and resting B-cells to induce immunoglobulin production, growth, and differentiation. Mechanistically, exerts its biological effects through a receptor composed of IL5RA subunit and the cytokine receptor common subunit beta/CSF2RB. Binding to the receptor leads to activation of various kinases including LYN, SYK and JAK2 and thereby propagates signals through the RAS-MAPK and JAK-STAT5 pathways respectively. This is Interleukin-5 (IL5) from Bos taurus (Bovine).